The following is a 271-amino-acid chain: Putative phosphoenolpyruvate synthase regulatory protein (271 aa).

152 to 159 (GVSRSGKT) contacts ADP.

It belongs to the pyruvate, phosphate/water dikinase regulatory protein family. PSRP subfamily.

It catalyses the reaction [pyruvate, water dikinase] + ADP = [pyruvate, water dikinase]-phosphate + AMP + H(+). The enzyme catalyses [pyruvate, water dikinase]-phosphate + phosphate + H(+) = [pyruvate, water dikinase] + diphosphate. Functionally, bifunctional serine/threonine kinase and phosphorylase involved in the regulation of the phosphoenolpyruvate synthase (PEPS) by catalyzing its phosphorylation/dephosphorylation. This chain is Putative phosphoenolpyruvate synthase regulatory protein, found in Dichelobacter nodosus (strain VCS1703A).